Reading from the N-terminus, the 118-residue chain is Flowering-promoting factor 1-like protein 4 (118 aa).

Belongs to the FPF1 family.

The protein is Flowering-promoting factor 1-like protein 4 of Oryza sativa subsp. japonica (Rice).